The sequence spans 723 residues: uncharacterized protein (723 aa).

Residues 1 to 12 (MTGKKKNRHQKK) show a composition bias toward basic residues. 4 disordered regions span residues 1–166 (MTGK…EKEI), 181–212 (IKRKKEKKVKPQPVQPTPPVPAPAPQQSSGWG), 268–289 (LPLSDTEDSDNDNDNGGDDNDN), and 391–455 (KNKS…NTST). Low complexity predominate over residues 30-42 (DETTTTTTTTTTT). 2 stretches are compositionally biased toward basic and acidic residues: residues 45–129 (EETK…KTDD) and 149–166 (TDIKDEKKEEKKKVEKEI). The stretch at 53 to 173 (IVENKDEDKK…KEIEDPNKKY (121 aa)) forms a coiled coil. A compositionally biased stretch (basic residues) spans 181–190 (IKRKKEKKVK). Over residues 193–204 (PVQPTPPVPAPA) the composition is skewed to pro residues. Acidic residues predominate over residues 272 to 288 (DTEDSDNDNDNGGDDND). A compositionally biased stretch (low complexity) spans 397–455 (DENNNNNNNNNQQQPQQQQTTSPTLSTSPTSPKSPTTTTTNTTTTTTTNTNNNNNNTST).

This is an uncharacterized protein from Dictyostelium discoideum (Social amoeba).